Consider the following 205-residue polypeptide: Cytochrome c oxidase subunit 3 (205 aa).

Helical transmembrane passes span 28-48, 72-92, 104-124, 142-162, and 184-204; these read GTIVFLSQELMFFAGLFAMYF, ALVITIILISSSVTAQFGVFA, WFSLTILLGAIFLVGQAYEYF, FFITTGFHAAHVLAGALAFVV, and SYYWHFVDVVWIGLFITIYFI.

It belongs to the cytochrome c oxidase subunit 3 family. Associates with subunits I, II and IV to form cytochrome c oxidase.

It is found in the cell membrane. It catalyses the reaction 4 Fe(II)-[cytochrome c] + O2 + 8 H(+)(in) = 4 Fe(III)-[cytochrome c] + 2 H2O + 4 H(+)(out). The chain is Cytochrome c oxidase subunit 3 (ctaE) from Corynebacterium diphtheriae (strain ATCC 700971 / NCTC 13129 / Biotype gravis).